A 433-amino-acid polypeptide reads, in one-letter code: Serine hydroxymethyltransferase (433 aa).

Residue 121 to 123 (AHV) participates in (6S)-5,6,7,8-tetrahydrofolate binding. Residue lysine 227 is modified to N6-(pyridoxal phosphate)lysine. Glutamate 243 serves as a coordination point for (6S)-5,6,7,8-tetrahydrofolate.

The protein belongs to the SHMT family. As to quaternary structure, homodimer. Pyridoxal 5'-phosphate is required as a cofactor.

The protein resides in the cytoplasm. Its pathway is amino-acid biosynthesis; glycine biosynthesis; glycine from L-serine: step 1/1. Functionally, catalyzes the reversible interconversion of serine and glycine with a modified folate serving as the one-carbon carrier. Also exhibits a pteridine-independent aldolase activity toward beta-hydroxyamino acids, producing glycine and aldehydes, via a retro-aldol mechanism. The chain is Serine hydroxymethyltransferase from Saccharolobus islandicus (strain M.14.25 / Kamchatka #1) (Sulfolobus islandicus).